Here is a 320-residue protein sequence, read N- to C-terminus: ATP-dependent 6-phosphofructokinase (320 aa).

Residue Gly-12 participates in ATP binding. Residues 22–26 and 55–60 each bind ADP; these read RGVVR and RYSVSD. ATP contacts are provided by residues 73 to 74 and 103 to 106; these read RF and GDGS. Asp-104 provides a ligand contact to Mg(2+). 126–128 provides a ligand contact to substrate; it reads TID. Asp-128 (proton acceptor) is an active-site residue. Arg-155 contributes to the ADP binding site. Residues Arg-163 and 170–172 each bind substrate; that span reads MGR. ADP-binding positions include 186 to 188, Lys-212, and 214 to 216; these read GCE and KKH. Substrate is bound by residues Glu-223, Arg-244, and 250–253; that span reads HIQR.

Belongs to the phosphofructokinase type A (PFKA) family. ATP-dependent PFK group I subfamily. Prokaryotic clade 'B1' sub-subfamily. Homotetramer. Mg(2+) is required as a cofactor.

The protein localises to the cytoplasm. It carries out the reaction beta-D-fructose 6-phosphate + ATP = beta-D-fructose 1,6-bisphosphate + ADP + H(+). It functions in the pathway carbohydrate degradation; glycolysis; D-glyceraldehyde 3-phosphate and glycerone phosphate from D-glucose: step 3/4. Its activity is regulated as follows. Allosterically activated by ADP and other diphosphonucleosides, and allosterically inhibited by phosphoenolpyruvate. Catalyzes the phosphorylation of D-fructose 6-phosphate to fructose 1,6-bisphosphate by ATP, the first committing step of glycolysis. The chain is ATP-dependent 6-phosphofructokinase from Citrobacter koseri (strain ATCC BAA-895 / CDC 4225-83 / SGSC4696).